Reading from the N-terminus, the 210-residue chain is uncharacterized protein (210 aa).

2 disordered regions span residues 1-21 and 168-210; these read MHRL…TDAI and EALQ…STAQ. The stretch at 21-175 forms a coiled coil; it reads IDSLDKRSDS…ELEALQQESS (155 aa). The segment covering 174–184 has biased composition (polar residues); sequence SSWLGDQSTAE.

Belongs to the SNF7 family.

This is an uncharacterized protein from Schizosaccharomyces pombe (strain 972 / ATCC 24843) (Fission yeast).